Here is a 339-residue protein sequence, read N- to C-terminus: Carboxyvinyl-carboxyphosphonate phosphorylmutase, chloroplastic (339 aa).

The N-terminal 30 residues, 1–30, are a transit peptide targeting the chloroplast; the sequence is MSMLMAVKTTSLCCSSLNLTASPTFRRNPR.

It belongs to the isocitrate lyase/PEP mutase superfamily.

The protein resides in the plastid. It is found in the chloroplast. It catalyses the reaction 1-carboxyvinyl carboxyphosphonate + H(+) = 3-(hydrohydroxyphosphoryl)pyruvate + CO2. The polypeptide is Carboxyvinyl-carboxyphosphonate phosphorylmutase, chloroplastic (Arabidopsis thaliana (Mouse-ear cress)).